The primary structure comprises 476 residues: 3-isopropylmalate dehydratase large subunit (476 aa).

[4Fe-4S] cluster contacts are provided by Cys-357, Cys-417, and Cys-420.

It belongs to the aconitase/IPM isomerase family. LeuC type 1 subfamily. Heterodimer of LeuC and LeuD. [4Fe-4S] cluster serves as cofactor.

It catalyses the reaction (2R,3S)-3-isopropylmalate = (2S)-2-isopropylmalate. Its pathway is amino-acid biosynthesis; L-leucine biosynthesis; L-leucine from 3-methyl-2-oxobutanoate: step 2/4. Functionally, catalyzes the isomerization between 2-isopropylmalate and 3-isopropylmalate, via the formation of 2-isopropylmaleate. The polypeptide is 3-isopropylmalate dehydratase large subunit (Mycobacterium leprae (strain TN)).